A 247-amino-acid polypeptide reads, in one-letter code: Putative trypsin-6 (247 aa).

An N-terminal signal peptide occupies residues 1-15; it reads MNPLLILAFVGAAVA. The region spanning 24–244 is the Peptidase S1 domain; the sequence is IVGGYTCEEN…YVDWIKDTIA (221 aa). Cys-48 and Cys-64 are oxidised to a cystine. The Charge relay system role is filled by His-63. Residues Glu-75, Asn-77, Val-80, and Glu-85 each coordinate Ca(2+). Asp-107 functions as the Charge relay system in the catalytic mechanism. Cystine bridges form between Cys-139–Cys-206, Cys-171–Cys-185, and Cys-196–Cys-220. Catalysis depends on Ser-200, which acts as the Charge relay system.

The protein belongs to the peptidase S1 family. Tryptase subfamily. Overexpressed in metastasing in non small cell lung tumors, leading to an enhanced cell migration.

It localises to the secreted. The catalysed reaction is Preferential cleavage: Arg-|-Xaa, Lys-|-Xaa.. Functionally, may regulate cell migration. The chain is Putative trypsin-6 (PRSS3P2) from Homo sapiens (Human).